We begin with the raw amino-acid sequence, 485 residues long: Glutamate--tRNA ligase (485 aa).

Positions 11-21 (PSPTGLLHIGN) match the 'HIGH' region motif. The 'KMSKS' region motif lies at 255–259 (KLSKR). K258 provides a ligand contact to ATP.

The protein belongs to the class-I aminoacyl-tRNA synthetase family. Glutamate--tRNA ligase type 1 subfamily. In terms of assembly, monomer.

The protein localises to the cytoplasm. The catalysed reaction is tRNA(Glu) + L-glutamate + ATP = L-glutamyl-tRNA(Glu) + AMP + diphosphate. In terms of biological role, catalyzes the attachment of glutamate to tRNA(Glu) in a two-step reaction: glutamate is first activated by ATP to form Glu-AMP and then transferred to the acceptor end of tRNA(Glu). In Streptococcus mutans serotype c (strain ATCC 700610 / UA159), this protein is Glutamate--tRNA ligase.